A 65-amino-acid polypeptide reads, in one-letter code: Hainantoxin-X (65 aa).

Positions 1-20 (MNMKILVLVAVLCLVVSTHA) are cleaved as a signal peptide. A propeptide spanning residues 21 to 37 (ERHSKTDMEDSPMIQER) is cleaved from the precursor. Intrachain disulfides connect Cys-39-Cys-56, Cys-46-Cys-59, and Cys-55-Cys-64.

The protein belongs to the neurotoxin 36 family. 02 subfamily. As to expression, expressed by the venom gland.

The protein localises to the secreted. Reversibly blocks N-type calcium channels (Cav2.2/CACNA1B) in rat dorsal root ganglion cells. Elicits no toxic symptoms in either vertebrates or invertebrates during a period of 48 hours post-injection, when it was assayed in vivo by direct injection into mice and cockroaches. This is Hainantoxin-X from Cyriopagopus hainanus (Chinese bird spider).